Reading from the N-terminus, the 359-residue chain is Protein Wnt-5b (359 aa).

The signal sequence occupies residues 1–17 (MPSLLLLFTAALLSSWA). Residues C83 and C94 are joined by a disulfide bond. N-linked (GlcNAc...) asparagine glycans are attached at residues N93 and N99. Intrachain disulfides connect C133/C141, C143/C161, C217/C231, C219/C226, C288/C319, C304/C314, C318/C358, C334/C349, C336/C346, and C341/C342. S223 carries the O-palmitoleoyl serine; by PORCN lipid modification. Residues N291 and N305 are each glycosylated (N-linked (GlcNAc...) asparagine).

This sequence belongs to the Wnt family. As to quaternary structure, interacts with PORCN. In terms of processing, palmitoleoylation is required for efficient binding to frizzled receptors. Depalmitoleoylation leads to Wnt signaling pathway inhibition.

Its subcellular location is the secreted. It localises to the extracellular space. The protein localises to the extracellular matrix. In terms of biological role, ligand for members of the frizzled family of seven transmembrane receptors. Probable developmental protein. May be a signaling molecule which affects the development of discrete regions of tissues. Is likely to signal over only few cell diameters. The chain is Protein Wnt-5b (WNT5B) from Homo sapiens (Human).